A 930-amino-acid polypeptide reads, in one-letter code: Translation initiation factor IF-2 (930 aa).

The segment covering 50–67 has biased composition (low complexity); sequence FKPAAAPKVEAKPAAPKV. 2 disordered regions span residues 50–217 and 260–346; these read FKPA…SSEE and EVVP…HELP. Composition is skewed to basic and acidic residues over residues 68 to 90 and 110 to 125; these read SAEKKAEKSEPAKPAVAKEEAKP and FKAEREARAKEQAERR. Positions 129–141 are enriched in low complexity; it reads KGNNRDQQQNGNR. 2 stretches are compositionally biased toward basic and acidic residues: residues 157-167 and 262-295; these read RDNRRFNDQAK and VPEKKEPAVDTRRKKQARPDKNRDDYDHEEDGPR. The segment covering 309–318 has biased composition (low complexity); sequence NQKNSNWNNN. A compositionally biased stretch (basic and acidic residues) spans 337 to 346; the sequence is VTERKFHELP. The tr-type G domain maps to 432-599; that stretch reads ERPPVVTIMG…TVLLVAEIQE (168 aa). The segment at 441 to 448 is G1; sequence GHVDHGKT. 441–448 contributes to the GTP binding site; the sequence is GHVDHGKT. The tract at residues 466–470 is G2; sequence GITQH. Positions 487–490 are G3; that stretch reads DTPG. GTP contacts are provided by residues 487–491 and 541–544; these read DTPGH and NKID. The tract at residues 541–544 is G4; it reads NKID. Residues 577-579 are G5; sequence SAK.

The protein belongs to the TRAFAC class translation factor GTPase superfamily. Classic translation factor GTPase family. IF-2 subfamily.

Its subcellular location is the cytoplasm. In terms of biological role, one of the essential components for the initiation of protein synthesis. Protects formylmethionyl-tRNA from spontaneous hydrolysis and promotes its binding to the 30S ribosomal subunits. Also involved in the hydrolysis of GTP during the formation of the 70S ribosomal complex. This chain is Translation initiation factor IF-2, found in Streptococcus pneumoniae (strain P1031).